Consider the following 230-residue polypeptide: Large ribosomal subunit protein uL1 (230 aa).

The protein belongs to the universal ribosomal protein uL1 family. Part of the 50S ribosomal subunit.

In terms of biological role, binds directly to 23S rRNA. The L1 stalk is quite mobile in the ribosome, and is involved in E site tRNA release. Functionally, protein L1 is also a translational repressor protein, it controls the translation of the L11 operon by binding to its mRNA. The polypeptide is Large ribosomal subunit protein uL1 (Acholeplasma laidlawii (strain PG-8A)).